A 115-amino-acid chain; its full sequence is Large ribosomal subunit protein bL19 (115 aa).

Belongs to the bacterial ribosomal protein bL19 family.

This protein is located at the 30S-50S ribosomal subunit interface and may play a role in the structure and function of the aminoacyl-tRNA binding site. The chain is Large ribosomal subunit protein bL19 from Pectobacterium carotovorum subsp. carotovorum (strain PC1).